The primary structure comprises 207 residues: Ribosomal RNA small subunit methyltransferase G (207 aa).

Residues G75, M80, 126–127, and R141 each bind S-adenosyl-L-methionine; that span reads VE.

It belongs to the methyltransferase superfamily. RNA methyltransferase RsmG family.

It localises to the cytoplasm. The catalysed reaction is guanosine(527) in 16S rRNA + S-adenosyl-L-methionine = N(7)-methylguanosine(527) in 16S rRNA + S-adenosyl-L-homocysteine. Its function is as follows. Specifically methylates the N7 position of guanine in position 527 of 16S rRNA. The polypeptide is Ribosomal RNA small subunit methyltransferase G (Laribacter hongkongensis (strain HLHK9)).